The chain runs to 287 residues: Bifunctional protein FolD (287 aa).

Residues 160–162 (GRS), Ser189, and Thr230 each bind NADP(+).

This sequence belongs to the tetrahydrofolate dehydrogenase/cyclohydrolase family. Homodimer.

It catalyses the reaction (6R)-5,10-methylene-5,6,7,8-tetrahydrofolate + NADP(+) = (6R)-5,10-methenyltetrahydrofolate + NADPH. It carries out the reaction (6R)-5,10-methenyltetrahydrofolate + H2O = (6R)-10-formyltetrahydrofolate + H(+). Its pathway is one-carbon metabolism; tetrahydrofolate interconversion. Catalyzes the oxidation of 5,10-methylenetetrahydrofolate to 5,10-methenyltetrahydrofolate and then the hydrolysis of 5,10-methenyltetrahydrofolate to 10-formyltetrahydrofolate. This is Bifunctional protein FolD from Chlamydia muridarum (strain MoPn / Nigg).